The primary structure comprises 399 residues: Elongation factor Tu (399 aa).

The tr-type G domain maps to 10-209 (KPHVNIGTIG…AVDSYIPTPT (200 aa)). Residues 19-26 (GHVDHGKT) form a G1 region. 19 to 26 (GHVDHGKT) is a GTP binding site. Threonine 26 is a Mg(2+) binding site. The segment at 60–64 (GITIA) is G2. The segment at 81–84 (DCPG) is G3. GTP-binding positions include 81-85 (DCPGH) and 136-139 (NKAD). The G4 stretch occupies residues 136–139 (NKAD). Residues 174–176 (SAL) form a G5 region.

This sequence belongs to the TRAFAC class translation factor GTPase superfamily. Classic translation factor GTPase family. EF-Tu/EF-1A subfamily. In terms of assembly, monomer.

The protein localises to the cytoplasm. The catalysed reaction is GTP + H2O = GDP + phosphate + H(+). In terms of biological role, GTP hydrolase that promotes the GTP-dependent binding of aminoacyl-tRNA to the A-site of ribosomes during protein biosynthesis. This chain is Elongation factor Tu, found in Campylobacter jejuni (strain RM1221).